The chain runs to 214 residues: Phosphatidylserine decarboxylase proenzyme (214 aa).

Ser-183 serves as the catalytic Schiff-base intermediate with substrate; via pyruvic acid. The residue at position 183 (Ser-183) is a Pyruvic acid (Ser); by autocatalysis.

This sequence belongs to the phosphatidylserine decarboxylase family. PSD-A subfamily. As to quaternary structure, heterodimer of a large membrane-associated beta subunit and a small pyruvoyl-containing alpha subunit. Pyruvate is required as a cofactor. Is synthesized initially as an inactive proenzyme. Formation of the active enzyme involves a self-maturation process in which the active site pyruvoyl group is generated from an internal serine residue via an autocatalytic post-translational modification. Two non-identical subunits are generated from the proenzyme in this reaction, and the pyruvate is formed at the N-terminus of the alpha chain, which is derived from the carboxyl end of the proenzyme. The post-translation cleavage follows an unusual pathway, termed non-hydrolytic serinolysis, in which the side chain hydroxyl group of the serine supplies its oxygen atom to form the C-terminus of the beta chain, while the remainder of the serine residue undergoes an oxidative deamination to produce ammonia and the pyruvoyl prosthetic group on the alpha chain.

The protein resides in the cell membrane. It catalyses the reaction a 1,2-diacyl-sn-glycero-3-phospho-L-serine + H(+) = a 1,2-diacyl-sn-glycero-3-phosphoethanolamine + CO2. The protein operates within phospholipid metabolism; phosphatidylethanolamine biosynthesis; phosphatidylethanolamine from CDP-diacylglycerol: step 2/2. In terms of biological role, catalyzes the formation of phosphatidylethanolamine (PtdEtn) from phosphatidylserine (PtdSer). The sequence is that of Phosphatidylserine decarboxylase proenzyme from Desulfotalea psychrophila (strain LSv54 / DSM 12343).